We begin with the raw amino-acid sequence, 204 residues long: MAKVQVNNVVVLDNPSPFYNPFQFEITFECIEDLSEDLEWKIIYVGSAESEEYDQVLDSVLVGPVPAGRHMFVFQADAPNAGLIPDADAVGVTVVLITCTYRGQEFIRVGYYVNNEYTETELRENPPVKPDFSKLQRNILASNPRVTRFHINWEDNTEKLEDAESSNPNLQSLLSTDALPSASKGWSTSENSLNVMLESHMDCM.

Residues 1 to 156 are interaction with histone H3, CHAF1B, and HIRA; the sequence is MAKVQVNNVV…TRFHINWEDN (156 aa). The Required for interaction with HIRA motif lies at 31-37; the sequence is IEDLSED. The interval 155–204 is required for interaction with HIRA; it reads DNTEKLEDAESSNPNLQSLLSTDALPSASKGWSTSENSLNVMLESHMDCM. Phosphoserine is present on Ser-192.

The protein belongs to the ASF1 family. In terms of assembly, interacts with histone H3 (via C-terminus), including histone H3.1, H3.2 and H3.3, and histone H4; the interaction with H3 is direct. Probably interacts with the heterodimeric form of H3-H4 taking the place of the second dimer. Interacts with the CHAF1A, CHAF1B and RBBP4 subunits of the CAF-1 complex. Interacts with CABIN1, HAT1, HIRA, NASP, TAF1 and UBN1. Found in a soluble complex with NASP and histones H3 and H4; the interaction with NASP is probably indirect and mediated by H3-H4. Interacts with CDAN1. Found in a cytosolic complex with IPO4 and histones H3 and H4. Interacts with CREBBP. In terms of processing, phosphorylated by TLK1 and TLK2. Highly phosphorylated in S-phase and at lower levels in M-phase. TLK2-mediated phosphorylation at Ser-192 prevents proteasome-dependent degradation. Phosphorylation at Ser-192 by PRKDC in response to DNA damage promotes the histone chaperone activity and ability to replace histones at double-strand breaks (DSBs) at stalled or collapsed replication forks, leading to RAD51 recruitment.

Its subcellular location is the nucleus. It is found in the chromosome. Its function is as follows. Histone chaperone that facilitates histone deposition and histone exchange and removal during nucleosome assembly and disassembly. Cooperates with chromatin assembly factor 1 (CAF-1) to promote replication-dependent chromatin assembly and with HIRA to promote replication-independent chromatin assembly. Promotes homologous recombination-mediated repair of double-strand breaks (DSBs) at stalled or collapsed replication forks: acts by mediating histone replacement at DSBs, leading to recruitment of the MMS22L-TONSL complex and subsequent loading of RAD51. Also involved in the nuclear import of the histone H3-H4 dimer together with importin-4 (IPO4): specifically recognizes and binds newly synthesized histones with the monomethylation of H3 'Lys-9' and acetylation at 'Lys-14' (H3K9me1K14ac) marks, and diacetylation at 'Lys-5' and 'Lys-12' of H4 (H4K5K12ac) marks in the cytosol. Required for the formation of senescence-associated heterochromatin foci (SAHF) and efficient senescence-associated cell cycle exit. This Mus musculus (Mouse) protein is Histone chaperone ASF1A.